The following is a 97-amino-acid chain: Secreted transmembrane peptide 4 (97 aa).

A signal peptide spans 1–33 (MTKNMTKKKMGLMSPNIAAFVLPMLLVLFTISS). Residues 54-67 (IVFTPPSSSCGGSP) carry the SCOOP motif motif. The SxS motif essential for MIK2 binding signature appears at 60–62 (SSS). Residues 75 to 97 (WMPRRPCRRTRPPGTNIPVSQSP) form a disordered region.

The protein belongs to the serine rich endogenous peptide (SCOOP) phytocytokine family. Interacts with MIK2 (via extracellular leucine-rich repeat domain); this interaction triggers the formation of complex between MIK2 and the BAK1/SERK3 and SERK4 coreceptors, and subsequent BAK1 activation by phosphorylation. Mostly expressed in leaves and stems, and, to a lower extent, in roots, siliques, seeds and flowers.

Its subcellular location is the cell membrane. The protein resides in the secreted. The protein localises to the extracellular space. It localises to the apoplast. In terms of biological role, brassicaceae-specific phytocytokine (plant endogenous peptide released into the apoplast) perceived by MIK2 in a BAK1/SERK3 and SERK4 coreceptors-dependent manner, that modulates various physiological and antimicrobial processes including growth prevention and reactive oxygen species (ROS) response regulation. Prevents general growth and development. The chain is Secreted transmembrane peptide 4 from Arabidopsis thaliana (Mouse-ear cress).